The following is a 134-amino-acid chain: Small ribosomal subunit protein uS9c (134 aa).

It belongs to the universal ribosomal protein uS9 family.

Its subcellular location is the plastid. The protein localises to the chloroplast. The sequence is that of Small ribosomal subunit protein uS9c (rps9) from Thalassiosira pseudonana (Marine diatom).